The chain runs to 490 residues: Dual specificity protein kinase CLK3 (490 aa).

Residues 1-138 are disordered; sequence MHHCKRYRSP…SKRSSRSVED (138 aa). Y7 carries the phosphotyrosine modification. A phosphoserine mark is found at S9, S49, S51, S67, S76, and S78. Basic and acidic residues-rich tracts occupy residues 26–56 and 63–76; these read YSREHEGRLRYPSRREPPPRRSRSRSHDRIP and EHRDSDTYRCEERS. The span at 88 to 116 shows a compositional bias: basic residues; the sequence is RSRHRRRSRERGPYRTRKHAHHCHKRRTR. The span at 117-130 shows a compositional bias: low complexity; sequence SCSSASSRSQQSSK. S135 is modified (phosphoserine). The 317-residue stretch at 156 to 472 folds into the Protein kinase domain; the sequence is YEIVGNLGEG…LAEALLHPFF (317 aa). ATP contacts are provided by residues 162–170 and K186; that span reads LGEGTFGKV. D283 (proton acceptor) is an active-site residue.

This sequence belongs to the protein kinase superfamily. CMGC Ser/Thr protein kinase family. Lammer subfamily. In terms of processing, autophosphorylates on all three types of residues.

It localises to the nucleus. The protein resides in the cytoplasm. The protein localises to the cytoplasmic vesicle. It is found in the secretory vesicle. Its subcellular location is the acrosome. It catalyses the reaction L-seryl-[protein] + ATP = O-phospho-L-seryl-[protein] + ADP + H(+). The catalysed reaction is L-threonyl-[protein] + ATP = O-phospho-L-threonyl-[protein] + ADP + H(+). It carries out the reaction L-tyrosyl-[protein] + ATP = O-phospho-L-tyrosyl-[protein] + ADP + H(+). Leucettine L41 inhibits its kinase activity and affects the regulation of alternative splicing mediated by phosphorylation of SR proteins. Dual specificity kinase acting on both serine/threonine and tyrosine-containing substrates. Phosphorylates serine- and arginine-rich (SR) proteins of the spliceosomal complex. May be a constituent of a network of regulatory mechanisms that enable SR proteins to control RNA splicing and can cause redistribution of SR proteins from speckles to a diffuse nucleoplasmic distribution. Phosphorylates SRSF1 and SRSF3. Regulates the alternative splicing of tissue factor (F3) pre-mRNA in endothelial cells. This Rattus norvegicus (Rat) protein is Dual specificity protein kinase CLK3 (Clk3).